The chain runs to 1000 residues: MTAPGRRSSTFSRLLRHGFTDPSAAERLLESAELEPVKADPVLLEALGATADPDLALLGLVRLVEAQDDHTARRELLDTLIAAKPLRDRLLGVLGASAALADHLARHPRDWQALVTYEPRDLHPGVEEFERGLAEAADPVSLRVAYRRCLLSIAARDVCGTTDLAQTAAELADLATATLRAALLIARTAAPDDAAICRLAVIAMGKCGGHELNYVSDVDVIFVGEPANGADEGKAVQAATRLASHMMRICSETTVEGTIWPVDANLRPEGRNGPLVRTLSSHLAYYQRWAKTWEFQALLKARPVAGDIGLGEEYVATLAPLVWQAAERDNFVADVQKMRRRVVANIPAAEIERELKLGPGGLRDVEFAVQLLQLVHGRADASLRSGTTLDALKALAAGGYVGRADAVQLDEAYRFLRTMEHRIQLFRLRRTHLVPEDDADLRRIGRSLGLRADPITDLNREWKRHATVVRRLHEKLFYRPLLDAVAQLAPGEARLSPNAARERLVALGYADPAAALRHLEALASGVTRKAAIQRTLLPVLLGWFADSADPDAGLLNFRKVSDALGKTPWYLRLLRDEGAAAENLARVLSAGRLAPDLLMRAPEAVALLGDGDGGRGGLEPRGRAQLEQEVLAAVGRAGGSEQAVTTVRGVRRRELFRTAARDIVSSYGTEETPAEADQGALVDLVGGAVSDLTAATLAGTLRAVVREGWGDTLPTRFAVVGMGRFGGYELGYGSDADVLFVHEPREGVDEQEAARAANAVVSEMRRLLQIPSADPPLLIDADLRPEGKSGPTVRTLTSYEAYYRRWSLVWESQALLRAEFVAGDEELGQRFIELIDPFRYPAEGLGDDAVREIRRLKARMEAERLPRGADPTLHTKLGRGGLSDVEWTVQLLQLQHGWVEPGLRTTRTRPALAAACAAGLLTGEDAAILDEAWVLATRVRNAVMLVRGRAGDTFPSDGRELAAVGRYLGYGPGHVGDMLDDYRRITRRARAVVDEQFYGA.

The adenylyl removase stretch occupies residues 1 to 481 (MTAPGRRSST…LHEKLFYRPL (481 aa)). The adenylyl transferase stretch occupies residues 487–1000 (QLAPGEARLS…AVVDEQFYGA (514 aa)).

This sequence belongs to the GlnE family. Requires Mg(2+) as cofactor.

It catalyses the reaction [glutamine synthetase]-O(4)-(5'-adenylyl)-L-tyrosine + phosphate = [glutamine synthetase]-L-tyrosine + ADP. It carries out the reaction [glutamine synthetase]-L-tyrosine + ATP = [glutamine synthetase]-O(4)-(5'-adenylyl)-L-tyrosine + diphosphate. In terms of biological role, involved in the regulation of glutamine synthetase GlnA, a key enzyme in the process to assimilate ammonia. When cellular nitrogen levels are high, the C-terminal adenylyl transferase (AT) inactivates GlnA by covalent transfer of an adenylyl group from ATP to specific tyrosine residue of GlnA, thus reducing its activity. Conversely, when nitrogen levels are low, the N-terminal adenylyl removase (AR) activates GlnA by removing the adenylyl group by phosphorolysis, increasing its activity. The regulatory region of GlnE binds the signal transduction protein PII (GlnB) which indicates the nitrogen status of the cell. The polypeptide is Bifunctional glutamine synthetase adenylyltransferase/adenylyl-removing enzyme (Streptomyces avermitilis (strain ATCC 31267 / DSM 46492 / JCM 5070 / NBRC 14893 / NCIMB 12804 / NRRL 8165 / MA-4680)).